The primary structure comprises 3097 residues: Neural-cadherin (3097 aa).

Residues 1–36 form the signal peptide; it reads MAARRCLNQLRQRYITNRFNICTCAIFLISLPFILA. Residues Asn97 and Asn150 are each glycosylated (N-linked (GlcNAc...) asparagine). Residues 181-305 enclose the Cadherin 1 domain; it reads VRENQPAGTR…LDENDNRPIF (125 aa). N-linked (GlcNAc...) asparagine glycosylation is found at Asn325 and Asn426. 15 consecutive Cadherin domains span residues 430 to 543, 554 to 651, 660 to 756, 766 to 858, 867 to 968, 978 to 1078, 1087 to 1183, 1193 to 1299, 1307 to 1414, 1423 to 1514, 1523 to 1630, 1639 to 1742, 1749 to 1861, 1870 to 1966, and 1974 to 2085; these read HREK…PPYF, VQLN…APQF, IPEN…APKF, VDED…EPKF, VDEN…KPVF, VEEG…PPLF, VKQD…PPVW, VKEN…IPLF, VLEG…PPYF, VDEN…PPVF, ITEE…APIF, VTEN…PPQF, TEVD…KPHF, VFED…APKF, and LPEH…QPGS. Asn930 is a glycosylation site (N-linked (GlcNAc...) asparagine). Asn1266 carries an N-linked (GlcNAc...) asparagine glycan. Intrachain disulfides connect Cys2346/Cys2357, Cys2351/Cys2366, Cys2368/Cys2377, Cys2559/Cys2585, Cys2592/Cys2607, Cys2601/Cys2616, Cys2618/Cys2627, Cys2787/Cys2822, Cys2869/Cys2880, Cys2874/Cys2891, and Cys2893/Cys2902. The EGF-like 1 domain occupies 2346–2377; the sequence is CRTTPCHNGGRCVDTRFGPHCSCPVGYTGPRC. The 207-residue stretch at 2379 to 2585 folds into the Laminin G-like 1 domain; sequence QTTRSFRGNG…GLSRNSVAGC (207 aa). Residues 2592–2627 form the EGF-like 2 domain; that stretch reads CAQTETTARCWEHGNCVGSLSEARCHCRPGWTGPAC. A Laminin G-like 2 domain is found at 2631 to 2822; sequence TIPTTFKAQS…TMARNLEKGC (192 aa). Residues 2869-2902 enclose the EGF-like 3 domain; sequence CLDMPCMNGATCINLEPRLRYRCICPDGFWGENC. A helical membrane pass occupies residues 2917–2937; sequence ALAAILVCLLIILILVLVFVV. Residues 2938–3097 lie on the Cytoplasmic side of the membrane; sequence YNRRREAHIK…PNPHNTELEL (160 aa).

As to expression, in the embryo, the protein first appears in the mesoderm at stage 9 and is present in the myoblasts and muscle fibers by stage 12 and stage 14, respectively. At stage 12 the protein is also located in the axons of the entire CNS, but not in the glial cells. In third instar larvae protein is expressed in the CNS neuropile, photoreceptor axons and precursors of adult muscles.

It localises to the cell membrane. Cadherins are calcium-dependent cell adhesion proteins. They preferentially interact with themselves in a homophilic manner in connecting cells; cadherins may thus contribute to the sorting of heterogeneous cell types. May associate with arm neural isoform and participate in the transmission of developmental information. This Drosophila melanogaster (Fruit fly) protein is Neural-cadherin (CadN).